We begin with the raw amino-acid sequence, 192 residues long: Casparian strip membrane protein 4 (192 aa).

Residues 1-29 (MTKDVVIEHGESSKAPLVPAPVAAGVGRA) are Cytoplasmic-facing. Residues 30 to 50 (VSIADVFLRFLSIVATIASAI) traverse the membrane as a helical segment. Residues 51–79 (SMGTTNETLPFFTQFIQFEAKYSDLPSFT) are Extracellular-facing. Asn56 carries an N-linked (GlcNAc...) asparagine glycan. Residues 80-100 (FFVAANAVVCTYLVLSIPLSI) traverse the membrane as a helical segment. At 101–112 (VHIIRPRARYSR) the chain is on the cytoplasmic side. A helical membrane pass occupies residues 113 to 133 (LILVFFDAVMLALLTAGASAA). Topologically, residues 134–166 (AAIVYLAHKGNVRANWFAICQQFDSFCERISGS) are extracellular. A helical membrane pass occupies residues 167–187 (LIGSFAAMVLLIVLIFLSAFA). At 188 to 192 (LARRH) the chain is on the cytoplasmic side.

Belongs to the Casparian strip membrane proteins (CASP) family. As to quaternary structure, homodimer and heterodimers.

Its subcellular location is the cell membrane. Its function is as follows. Regulates membrane-cell wall junctions and localized cell wall deposition. Required for establishment of the Casparian strip membrane domain (CSD) and the subsequent formation of Casparian strips, a cell wall modification of the root endodermis that determines an apoplastic barrier between the intraorganismal apoplasm and the extraorganismal apoplasm and prevents lateral diffusion. This chain is Casparian strip membrane protein 4, found in Sorghum bicolor (Sorghum).